The chain runs to 230 residues: MGQKVHPNGIRLGITKPWISTWYADKSDYANNLNSDWEVRKYLADKLQAASVSKIVIERPAKSIRVTIHTARPGVVIGKKGEDVEVLRAAVSKLAGTPAQINIAEIRKPELDAKLVADSIAQQLERRVMFRRAMKRAVQNAMRIGAQGIKVEVSGRLGGAEIARSEWYREGRVPLHTLRADIDYSTSESHTQYGVIGIKVWIFKGEVLDGMLPQIEEPKQQQPKRKPRGK.

The region spanning 39–107 (VRKYLADKLQ…PAQINIAEIR (69 aa)) is the KH type-2 domain.

It belongs to the universal ribosomal protein uS3 family. In terms of assembly, part of the 30S ribosomal subunit. Forms a tight complex with proteins S10 and S14.

Functionally, binds the lower part of the 30S subunit head. Binds mRNA in the 70S ribosome, positioning it for translation. The sequence is that of Small ribosomal subunit protein uS3 from Shewanella oneidensis (strain ATCC 700550 / JCM 31522 / CIP 106686 / LMG 19005 / NCIMB 14063 / MR-1).